A 330-amino-acid chain; its full sequence is MKKIAVDAMGGDYAPQAIVEGVNQALSDFSDIEVQLYGDEAKIKPYLTATERVSIIHTDEKIDSDDEPTRAIRNKKNASMVLAAKAVKDGEADAVLSAGNTGALLAAGFFIVGRIKNIDRPGLMSTLPTVDGKGFDMLDLGANAENTAQHLHQYAVLGSFYAKNVRGIAQPRVGLLNNGTESSKGDPLRKETYELLAADESLNFIGNVEGRDLMNGVADVVVADGFTGNAVLKSIEGTAMGIMGLLKTAITGGGLRAKLGALLLKDSLSGLKKQLNYSDVGGAVLFGVKAPVVKTHGSSDAKAVYSTIRQIRTMLETDVVAQTAREFSGE.

It belongs to the PlsX family. Homodimer. Probably interacts with PlsY.

The protein resides in the cytoplasm. The catalysed reaction is a fatty acyl-[ACP] + phosphate = an acyl phosphate + holo-[ACP]. Its pathway is lipid metabolism; phospholipid metabolism. Catalyzes the reversible formation of acyl-phosphate (acyl-PO(4)) from acyl-[acyl-carrier-protein] (acyl-ACP). This enzyme utilizes acyl-ACP as fatty acyl donor, but not acyl-CoA. The chain is Phosphate acyltransferase from Streptococcus pneumoniae (strain ATCC 700669 / Spain 23F-1).